We begin with the raw amino-acid sequence, 495 residues long: Probable histidine ammonia-lyase (495 aa).

The 5-imidazolinone (Ala-Gly) cross-link spans 141–143 (ASG). At S142 the chain carries 2,3-didehydroalanine (Ser).

It belongs to the PAL/histidase family. In terms of processing, contains an active site 4-methylidene-imidazol-5-one (MIO), which is formed autocatalytically by cyclization and dehydration of residues Ala-Ser-Gly.

It is found in the cytoplasm. The enzyme catalyses L-histidine = trans-urocanate + NH4(+). The protein operates within amino-acid degradation; L-histidine degradation into L-glutamate; N-formimidoyl-L-glutamate from L-histidine: step 1/3. In Thermoplasma volcanium (strain ATCC 51530 / DSM 4299 / JCM 9571 / NBRC 15438 / GSS1), this protein is Probable histidine ammonia-lyase.